The chain runs to 334 residues: Biotin synthase (334 aa).

Positions 55–280 (EEIEVEGIIS…HTMLRFAGGR (226 aa)) constitute a Radical SAM core domain. [4Fe-4S] cluster contacts are provided by Cys-70, Cys-74, and Cys-77. [2Fe-2S] cluster is bound by residues Cys-113, Cys-205, and Arg-275.

It belongs to the radical SAM superfamily. Biotin synthase family. In terms of assembly, homodimer. The cofactor is [4Fe-4S] cluster. It depends on [2Fe-2S] cluster as a cofactor.

The enzyme catalyses (4R,5S)-dethiobiotin + (sulfur carrier)-SH + 2 reduced [2Fe-2S]-[ferredoxin] + 2 S-adenosyl-L-methionine = (sulfur carrier)-H + biotin + 2 5'-deoxyadenosine + 2 L-methionine + 2 oxidized [2Fe-2S]-[ferredoxin]. Its pathway is cofactor biosynthesis; biotin biosynthesis; biotin from 7,8-diaminononanoate: step 2/2. Functionally, catalyzes the conversion of dethiobiotin (DTB) to biotin by the insertion of a sulfur atom into dethiobiotin via a radical-based mechanism. This chain is Biotin synthase, found in Corynebacterium glutamicum (strain ATCC 13032 / DSM 20300 / JCM 1318 / BCRC 11384 / CCUG 27702 / LMG 3730 / NBRC 12168 / NCIMB 10025 / NRRL B-2784 / 534).